A 398-amino-acid chain; its full sequence is Phosphoglycerate kinase (398 aa).

Residues D21–N23, R36, H59–R62, R119, and R157 each bind substrate. Residues K208, G296, E327, and G354–S357 contribute to the ATP site.

It belongs to the phosphoglycerate kinase family. As to quaternary structure, monomer.

It localises to the cytoplasm. The catalysed reaction is (2R)-3-phosphoglycerate + ATP = (2R)-3-phospho-glyceroyl phosphate + ADP. It participates in carbohydrate degradation; glycolysis; pyruvate from D-glyceraldehyde 3-phosphate: step 2/5. The sequence is that of Phosphoglycerate kinase from Streptococcus pneumoniae serotype 2 (strain D39 / NCTC 7466).